Here is a 489-residue protein sequence, read N- to C-terminus: Anthranilate synthase component 1 1 (489 aa).

L-tryptophan is bound at residue 262 to 264 (PYS). The interval 288 to 309 (DRIETEPIAGTRPRGETPDADD) is disordered. 297-298 (GT) provides a ligand contact to chorismate. Basic and acidic residues predominate over residues 300 to 309 (PRGETPDADD). Glu-324 serves as a coordination point for Mg(2+). Residues Tyr-412, Arg-432, 446–448 (GAG), and Gly-448 each bind chorismate. Residue Glu-461 coordinates Mg(2+).

It belongs to the anthranilate synthase component I family. Tetramer of two components I and two components II. It depends on Mg(2+) as a cofactor.

The catalysed reaction is chorismate + L-glutamine = anthranilate + pyruvate + L-glutamate + H(+). The protein operates within amino-acid biosynthesis; L-tryptophan biosynthesis; L-tryptophan from chorismate: step 1/5. In Haloarcula marismortui (strain ATCC 43049 / DSM 3752 / JCM 8966 / VKM B-1809) (Halobacterium marismortui), this protein is Anthranilate synthase component 1 1 (trpE1).